The chain runs to 77 residues: Conotoxin Mr8.2 (77 aa).

A signal peptide spans 1–16 (MLRLITAAVLVSACLA). The propeptide occupies 17–32 (YPQKKRTPPQTRPTSR).

This sequence belongs to the conotoxin B2 family. Contains 5 disulfide bonds. In terms of tissue distribution, expressed by the venom duct.

The protein localises to the secreted. The protein is Conotoxin Mr8.2 of Conus marmoreus (Marble cone).